Consider the following 519-residue polypeptide: MTCPDKPGQLINWFICSLCVPRVRKLWSSRRPRTRRNLLLGTACAIYLGFLVSQVGRASLQHGQAAEKGPHRSRDTAEPSFPEIPLDGTLAPPESQGNGSTLQPNVVYITLRSKRSKPANIRGTVKPKRRKKHAVASAAPGQEALVGPSLQPQEAAREADAVAPGYAQGANLVKIGERPWRLVRGPGVRAGGPDFLQPSSRESNIRIYSESAPSWLSKDDIRRMRLLADSAVAGLRPVSSRSGARLLVLEGGAPGAVLRCGPSPCGLLKQPLDMSEVFAFHLDRILGLNRTLPSVSRKAEFIQDGRPCPIILWDASLSSASNDTHSSVKLTWGTYQQLLKQKCWQNGRVPKPESGCTEIHHHEWSKMALFDFLLQIYNRLDTNCCGFRPRKEDACVQNGLRPKCDDQGSAALAHIIQRKHDPRHLVFIDNKGFFDRSEDNLNFKLLEGIKEFPASAVSVLKSQHLRQKLLQSLFLDKVYWESQGGRQGIEKLIDVIEHRAKILITYINAHGVKVLPMNE.

The Cytoplasmic segment spans residues 1 to 37 (MTCPDKPGQLINWFICSLCVPRVRKLWSSRRPRTRRN). A helical; Signal-anchor for type II membrane protein membrane pass occupies residues 38–55 (LLLGTACAIYLGFLVSQV). The Extracellular segment spans residues 56–519 (GRASLQHGQA…HGVKVLPMNE (464 aa)). Residues 62-103 (HGQAAEKGPHRSRDTAEPSFPEIPLDGTLAPPESQGNGSTLQ) are disordered. Positions 68–77 (KGPHRSRDTA) are enriched in basic and acidic residues. An N-linked (GlcNAc...) asparagine glycan is attached at asparagine 289.

It belongs to the GASK family.

The protein localises to the golgi apparatus membrane. This is Golgi-associated kinase 1B from Homo sapiens (Human).